Consider the following 232-residue polypeptide: Nuclear transcription factor Y subunit nfyc-1 (232 aa).

The segment at 191 to 232 (TVPTTSTNGPGHMSEDSFQDPNMHSDFHQRTSNSSVNRSHHN) is disordered. Polar residues predominate over residues 220 to 232 (RTSNSSVNRSHHN).

Belongs to the NFYC/HAP5 subunit family. Forms two NF-Y heterotrimeric transcription factor complexes: the nfya-1-NF-Y complex is composed of nfya-1, nfyb-1 and nfyc-1, and the nfya-2-NF-Y complex is composed of nfya-2, nfyb-1 and nfyc-1. Interacts with nfyb-1; the interaction is direct and is required for the interaction with either nfya-1 or nfya-2, and subsequent binding of the complex to the 5'-CCAAT-3' box motif in DNA. In terms of tissue distribution, expressed in certain parts of the gonads with high expression in fertilized oocytes in the uterus and mature oocytes from the distal to the proximal arm of the gonad, but weak expression in the syncytial ovaries and immature oocytes at the beginning of the proximal arm of the gonad. Expressed in the excretory cell, secretory cells in the pharyngeal terminal bulb wall, in the small ganglia surrounding the pharynx and in the neurons running anteriorly to the sensory organs in the head. Not expressed in the intestine, the hypodermis or body wall muscle surrounding the pseudocoelomic space.

It localises to the nucleus. Its subcellular location is the cytoplasm. The protein resides in the perikaryon. Functionally, component of sequence-specific heterotrimeric transcription factor (nfya-1-NF-Y and nfya-2-NF-Y) complexes which specifically recognize a 5'-CCAAT-3' box motif found in the promoters of its target genes to regulate their expression and control cellular identity in particular tissue types. In association with the components in the NF-Y complexes, represses the expression of the T-box transcription factor tbx-2 throughout larval development, which most likely restricts its expression to certain tissues. May act to repress txb-2 expression in conjunction with tbx-2 itself, which has an autoregulatory role. In association with the components in the nfya-1-NF-Y complex, negatively regulates the expression of the homeobox protein egl-5 to spatially restrict its expression in tissues such as the head. May regulate egl-5 expression in association with the mes-2-mes-3-mes-6 complex. The sequence is that of Nuclear transcription factor Y subunit nfyc-1 from Caenorhabditis elegans.